Here is a 132-residue protein sequence, read N- to C-terminus: Large ribosomal subunit protein uL14 (132 aa).

This sequence belongs to the universal ribosomal protein uL14 family. As to quaternary structure, part of the 50S ribosomal subunit. Forms a cluster with proteins L3 and L24e, part of which may contact the 16S rRNA in 2 intersubunit bridges.

Binds to 23S rRNA. Forms part of two intersubunit bridges in the 70S ribosome. This is Large ribosomal subunit protein uL14 from Methanosarcina acetivorans (strain ATCC 35395 / DSM 2834 / JCM 12185 / C2A).